Consider the following 544-residue polypeptide: D-2-hydroxyglutarate dehydrogenase, mitochondrial (544 aa).

A mitochondrion-targeting transit peptide spans Met-1 to Trp-10. Residues Val-119–Lys-298 form the FAD-binding PCMH-type domain. Residue Lys-124 is modified to N6-succinyllysine. Positions 409, 413, and 424 each coordinate (R)-2-hydroxyglutarate. Arg-409 serves as a coordination point for (R)-lactate. (R)-malate contacts are provided by Arg-409, Thr-413, and Lys-424. His-457 and His-464 together coordinate Zn(2+). Asn-466 contributes to the (R)-2-hydroxyglutarate binding site. Glu-498 is a binding site for Zn(2+). His-499 contributes to the (R)-2-hydroxyglutarate binding site. A (R)-lactate-binding site is contributed by His-499. Position 499 (His-499) interacts with (R)-malate.

This sequence belongs to the FAD-binding oxidoreductase/transferase type 4 family. FAD is required as a cofactor.

It is found in the mitochondrion. The enzyme catalyses (R)-2-hydroxyglutarate + A = 2-oxoglutarate + AH2. The catalysed reaction is (R)-malate + A = oxaloacetate + AH2. Activated by zinc and cobalt ions. Functionally, catalyzes the oxidation of D-2-hydroxyglutarate (D-2-HG) to alpha-ketoglutarate. Also catalyzes the oxidation of other D-2-hydroxyacids, such as D-malate (D-MAL) and D-lactate (D-LAC). Exhibits high activities towards D-2-HG and D-MAL but a very weak activity towards D-LAC. The sequence is that of D-2-hydroxyglutarate dehydrogenase, mitochondrial (D2HGDH) from Bos taurus (Bovine).